A 161-amino-acid chain; its full sequence is Glycine/sarcosine/betaine reductase complex component A2 (161 aa).

U42 is an active-site residue. Residue U42 is a non-standard amino acid, selenocysteine.

The protein belongs to the GrdA family. Monomer. Component of the glycine, sarcosine and betaine reductase complexes, together with components B and C.

It carries out the reaction acetyl phosphate + [thioredoxin]-disulfide + NH4(+) + H2O = [thioredoxin]-dithiol + glycine + phosphate + H(+). The enzyme catalyses acetyl phosphate + methylamine + [thioredoxin]-disulfide + H2O = sarcosine + [thioredoxin]-dithiol + phosphate + H(+). The catalysed reaction is acetyl phosphate + trimethylamine + [thioredoxin]-disulfide + H2O = glycine betaine + [thioredoxin]-dithiol + phosphate + H(+). Functionally, in the first step of glycine, betaine and sarcosine reductases, the substrate is bound to component PB via a Schiff base intermediate. Then the PB-activated substrate is nucleophilically attacked by the selenol anion of component PA to transform it to a carboxymethylated selenoether and the respective amine. By action of component PC, acetyl phosphate is formed, leaving component PA in its oxidized state. Finally component PA becomes reduced by the thioredoxin system to start a new catalytic cycle of reductive deamination. This is Glycine/sarcosine/betaine reductase complex component A2 (grdA2) from Photobacterium profundum (strain SS9).